The sequence spans 58 residues: Preprotein translocase subunit SecG (58 aa).

Over 1 to 33 the chain is Cytoplasmic; that stretch reads MARRRKYEGLNPFVAAGLIKFSEEGELEKIKLS. Residues 34–55 form a helical membrane-spanning segment; sequence PKAAIAISLAIIAAILALNLLL. Over 56–58 the chain is Extracellular; it reads PPP.

The protein belongs to the SEC61-beta family. Component of the protein translocase complex. Heterotrimer consisting of alpha (SecY), beta (SecG) and gamma (SecE) subunits. Can form oligomers of the heterotrimer.

Its subcellular location is the cell membrane. Functionally, involved in protein export. The function of the beta subunit is unknown, but it may be involved in stabilization of the trimeric complex. The sequence is that of Preprotein translocase subunit SecG from Pyrobaculum calidifontis (strain DSM 21063 / JCM 11548 / VA1).